The following is a 133-amino-acid chain: MRHSNSGKKLGRTPSHRKALFRNLAKALLTHGKIRTTEIKAKELRRVVEPLITLALRNDLHARRQAYSVLGSHQLVKRLFDEIGPAFVGVPGGYTRVVKLGQPRRGDCAPLAIIEFTRTVAASEAAAAPAEAE.

It belongs to the bacterial ribosomal protein bL17 family. In terms of assembly, part of the 50S ribosomal subunit. Contacts protein L32.

The protein is Large ribosomal subunit protein bL17 of Nitratidesulfovibrio vulgaris (strain ATCC 29579 / DSM 644 / CCUG 34227 / NCIMB 8303 / VKM B-1760 / Hildenborough) (Desulfovibrio vulgaris).